The sequence spans 892 residues: Translation initiation factor IF-2 (892 aa).

The interval 88–305 (KKRTFVKRDP…SLQQGFQKPA (218 aa)) is disordered. Composition is skewed to basic and acidic residues over residues 93–159 (VKRD…KDKV) and 166–216 (DMTK…EENK). The span at 254 to 269 (GRGRNAKAARPAKKGK) shows a compositional bias: basic residues. Residues 270–282 (HAESKADREEARA) show a composition bias toward basic and acidic residues. Residues 391–560 (PRAPVVTIMG…LLQAEVLELK (170 aa)) form the tr-type G domain. Residues 400-407 (GHVDHGKT) form a G1 region. Residue 400–407 (GHVDHGKT) coordinates GTP. The G2 stretch occupies residues 425–429 (GITQH). The segment at 446–449 (DTPG) is G3. GTP-binding positions include 446-450 (DTPGH) and 500-503 (NKID). Residues 500–503 (NKID) are G4. The tract at residues 536–538 (SAK) is G5.

This sequence belongs to the TRAFAC class translation factor GTPase superfamily. Classic translation factor GTPase family. IF-2 subfamily.

It localises to the cytoplasm. Functionally, one of the essential components for the initiation of protein synthesis. Protects formylmethionyl-tRNA from spontaneous hydrolysis and promotes its binding to the 30S ribosomal subunits. Also involved in the hydrolysis of GTP during the formation of the 70S ribosomal complex. This chain is Translation initiation factor IF-2, found in Salmonella agona (strain SL483).